The following is a 137-amino-acid chain: Large ribosomal subunit protein uL16 (137 aa).

It belongs to the universal ribosomal protein uL16 family. In terms of assembly, part of the 50S ribosomal subunit.

Binds 23S rRNA and is also seen to make contacts with the A and possibly P site tRNAs. This is Large ribosomal subunit protein uL16 from Nitratidesulfovibrio vulgaris (strain ATCC 29579 / DSM 644 / CCUG 34227 / NCIMB 8303 / VKM B-1760 / Hildenborough) (Desulfovibrio vulgaris).